A 209-amino-acid chain; its full sequence is MANVHVINHPLVQHKLTIIRDKNTGTKAFRELVDEVATLMAYEITRDMELEDIQVETPLQTTTAKTLTGKKLGIVPILRAGLGMQDGILKLIPAAKVGHVGLYRDHDTLEPVEYFVKLPSDVEERLFIVVDPMLATGGSAIMAIDCLKKRGARNMKFMCLVAAPEGVKALQDAHPDVEIYVAGLDEKLDENGYIRPGLGDAGDRLFGTK.

Residues Arg79, Arg104, and 131-139 (DPMLATGGS) contribute to the 5-phospho-alpha-D-ribose 1-diphosphate site. Uracil is bound by residues Ile194 and 199 to 201 (GDA). Asp200 is a 5-phospho-alpha-D-ribose 1-diphosphate binding site.

The protein belongs to the UPRTase family. Requires Mg(2+) as cofactor.

The enzyme catalyses UMP + diphosphate = 5-phospho-alpha-D-ribose 1-diphosphate + uracil. It functions in the pathway pyrimidine metabolism; UMP biosynthesis via salvage pathway; UMP from uracil: step 1/1. Its activity is regulated as follows. Allosterically activated by GTP. Functionally, catalyzes the conversion of uracil and 5-phospho-alpha-D-ribose 1-diphosphate (PRPP) to UMP and diphosphate. The sequence is that of Uracil phosphoribosyltransferase from Listeria monocytogenes serovar 1/2a (strain ATCC BAA-679 / EGD-e).